A 443-amino-acid chain; its full sequence is Probable glycine dehydrogenase (decarboxylating) subunit 1 (443 aa).

Belongs to the GcvP family. N-terminal subunit subfamily. In terms of assembly, the glycine cleavage system is composed of four proteins: P, T, L and H. In this organism, the P 'protein' is a heterodimer of two subunits.

The catalysed reaction is N(6)-[(R)-lipoyl]-L-lysyl-[glycine-cleavage complex H protein] + glycine + H(+) = N(6)-[(R)-S(8)-aminomethyldihydrolipoyl]-L-lysyl-[glycine-cleavage complex H protein] + CO2. Its function is as follows. The glycine cleavage system catalyzes the degradation of glycine. The P protein binds the alpha-amino group of glycine through its pyridoxal phosphate cofactor; CO(2) is released and the remaining methylamine moiety is then transferred to the lipoamide cofactor of the H protein. The polypeptide is Probable glycine dehydrogenase (decarboxylating) subunit 1 (Solidesulfovibrio magneticus (strain ATCC 700980 / DSM 13731 / RS-1) (Desulfovibrio magneticus)).